Consider the following 248-residue polypeptide: Ribonuclease PH (248 aa).

Residues R86 and 124-126 each bind phosphate; that span reads GTR.

The protein belongs to the RNase PH family. Homohexameric ring arranged as a trimer of dimers.

It catalyses the reaction tRNA(n+1) + phosphate = tRNA(n) + a ribonucleoside 5'-diphosphate. In terms of biological role, phosphorolytic 3'-5' exoribonuclease that plays an important role in tRNA 3'-end maturation. Removes nucleotide residues following the 3'-CCA terminus of tRNAs; can also add nucleotides to the ends of RNA molecules by using nucleoside diphosphates as substrates, but this may not be physiologically important. Probably plays a role in initiation of 16S rRNA degradation (leading to ribosome degradation) during starvation. This Clostridium perfringens (strain SM101 / Type A) protein is Ribonuclease PH.